We begin with the raw amino-acid sequence, 1087 residues long: Platelet-derived growth factor receptor alpha (1087 aa).

Residues 1–23 form the signal peptide; the sequence is MGTPPRTFLILGCFLTGPLLTLC. Residues 24–528 are Extracellular-facing; it reads QLPLPTIVPN…PTLRSELTVA (505 aa). 5 Ig-like C2-type domains span residues 26-104, 116-208, 213-312, 314-411, and 414-517; these read PLPT…YNHT, IYIY…IYIL, QLPV…VHDK, FIHL…SLLI, and PALI…LKLV. N-linked (GlcNAc...) asparagine glycans are attached at residues Asn-44, Asn-75, Asn-88, and Asn-102. A disulfide bridge links Cys-49 with Cys-99. Disulfide bonds link Cys-149–Cys-189 and Cys-235–Cys-290. N-linked (GlcNAc...) asparagine glycans are attached at residues Asn-353, Asn-359, Asn-458, and Asn-468. A disulfide bridge connects residues Cys-435 and Cys-501. The chain crosses the membrane as a helical span at residues 529-549; sequence AAVLVLLVIVIISLIVLVIIW. At 550–1087 the chain is on the cytoplasmic side; the sequence is KQKPRYEIRW…SSDLVEDSFL (538 aa). Residues Tyr-572 and Tyr-574 each carry the phosphotyrosine; by autocatalysis modification. In terms of domain architecture, Protein kinase spans 593–954; that stretch reads LVLGRILGSG…HLSEIVESLL (362 aa). ATP-binding positions include 599–607 and Lys-627; that span reads LGSGAFGKV. Tyr-720, Tyr-731, Tyr-742, Tyr-754, Tyr-762, and Tyr-768 each carry phosphotyrosine; by autocatalysis. The active-site Proton acceptor is Asp-818. Tyr-849 and Tyr-988 each carry phosphotyrosine; by autocatalysis. The span at 1000 to 1011 shows a compositional bias: basic and acidic residues; sequence KDRESGFDEQRL. The interval 1000–1059 is disordered; sequence KDRESGFDEQRLSADSGYITPLPDIDPVSEDELGKRNRHSSQTSEESAIETGSSSSTFIK. Residue Tyr-1017 is modified to Phosphotyrosine; by autocatalysis. Residues 1039–1057 show a composition bias toward polar residues; it reads SSQTSEESAIETGSSSSTF.

The protein belongs to the protein kinase superfamily. Tyr protein kinase family. CSF-1/PDGF receptor subfamily. Interacts with homodimeric PDGFA, PDGFB and PDGFC, and with heterodimers formed by PDGFA and PDGFB. Monomer in the absence of bound ligand. Interaction with dimeric PDGFA, PDGFB and/or PDGFC leads to receptor dimerization, where both PDGFRA homodimers and heterodimers with PDGFRB are observed. Post-translationally, ubiquitinated, leading to its internalization and degradation. Autophosphorylated on tyrosine residues upon ligand binding. Autophosphorylation occurs in trans, i.e. one subunit of the dimeric receptor phosphorylates tyrosine residues on the other subunit.

It localises to the cell membrane. It is found in the cell projection. The protein resides in the cilium. Its subcellular location is the golgi apparatus. The enzyme catalyses L-tyrosyl-[protein] + ATP = O-phospho-L-tyrosyl-[protein] + ADP + H(+). Its activity is regulated as follows. Present in an inactive conformation in the absence of bound ligand. Binding of PDGFA and/or PDGFB leads to dimerization and activation by autophosphorylation on tyrosine residues. Functionally, tyrosine-protein kinase that acts as a cell-surface receptor for PDGFA, PDGFB and PDGFC and plays an essential role in the regulation of embryonic development, cell proliferation, survival and chemotaxis. Depending on the context, promotes or inhibits cell proliferation and cell migration. Plays an important role in the differentiation of bone marrow-derived mesenchymal stem cells. Required for normal skeleton development. Required for normal development of the gastrointestinal tract. Plays a role in cell migration and chemotaxis in wound healing. Plays a role in platelet activation, secretion of agonists from platelet granules, and in thrombin-induced platelet aggregation. Binding of its cognate ligands - homodimeric PDGFA, homodimeric PDGFB, heterodimers formed by PDGFA and PDGFB or homodimeric PDGFC -leads to the activation of several signaling cascades; the response depends on the nature of the bound ligand and is modulated by the formation of heterodimers between PDGFRA and PDGFRB. Phosphorylates PIK3R1, PLCG1, and PTPN11. Activation of PLCG1 leads to the production of the cellular signaling molecules diacylglycerol and inositol 1,4,5-trisphosphate, mobilization of cytosolic Ca(2+) and the activation of protein kinase C. Phosphorylates PIK3R1, the regulatory subunit of phosphatidylinositol 3-kinase, and thereby mediates activation of the AKT1 signaling pathway. Mediates activation of HRAS and of the MAP kinases MAPK1/ERK2 and/or MAPK3/ERK1. Promotes activation of STAT family members STAT1, STAT3 and STAT5A and/or STAT5B. Receptor signaling is down-regulated by protein phosphatases that dephosphorylate the receptor and its down-stream effectors, and by rapid internalization of the activated receptor. The chain is Platelet-derived growth factor receptor alpha (PDGFRA) from Gallus gallus (Chicken).